A 270-amino-acid polypeptide reads, in one-letter code: Monocyte to macrophage differentiation factor 2 (270 aa).

Topologically, residues 1–38 (MFAPRLLDFQKTKYARFMNHRVPAHKRYQPTEYEHAAN) are cytoplasmic. Residues 39-59 (CATHAFWIIPSILGSSNLYFL) traverse the membrane as a helical segment. Topologically, residues 60 to 65 (SDDDWE) are lumenal. Residues 66–86 (TISAWIYGLGLCGLFVVSTVF) form a helical membrane-spanning segment. Residues 87–102 (HTISWKKSHLRMVEHC) are Cytoplasmic-facing. Residues 103–123 (LHMFDRMVIYFFIAASYAPWL) form a helical membrane-spanning segment. Residues 124 to 132 (NLRELGPWA) lie on the Lumenal side of the membrane. A helical transmembrane segment spans residues 133-153 (SHMRWLVWIMASVGTIYVFFF). The Cytoplasmic portion of the chain corresponds to 154-182 (HERTGSCVQFLRGEACPKAGTACLPARYK). The helical transmembrane segment at 183–203 (LVELLCYVVMGFFPALVILSM) threads the bilayer. The Lumenal segment spans residues 204-205 (PN). A helical membrane pass occupies residues 206–226 (TEGIWELVTGGVFYCLGMVFF). The Cytoplasmic segment spans residues 227 to 233 (KSDGRIP). Residues 234 to 254 (FAHAIWHLFVAFGAGTHYYAI) form a helical membrane-spanning segment. Topologically, residues 255–270 (WRYLYLPSTLQTKVSK) are lumenal.

Belongs to the ADIPOR family. As to expression, shows restricted expression with highest levels in brain and testis.

The protein resides in the golgi apparatus membrane. The chain is Monocyte to macrophage differentiation factor 2 from Homo sapiens (Human).